The chain runs to 288 residues: DegV domain-containing protein DR_1903 (288 aa).

The DegV domain maps to 2-280 (IAVTTESTAD…PGVVAVLAFP (279 aa)). Hexadecanoate contacts are provided by Thr-59 and Thr-93.

In terms of biological role, may bind long-chain fatty acids, such as palmitate, and may play a role in lipid transport or fatty acid metabolism. This is DegV domain-containing protein DR_1903 from Deinococcus radiodurans (strain ATCC 13939 / DSM 20539 / JCM 16871 / CCUG 27074 / LMG 4051 / NBRC 15346 / NCIMB 9279 / VKM B-1422 / R1).